A 314-amino-acid polypeptide reads, in one-letter code: Mitochondrial 2-oxoglutarate/malate carrier protein (314 aa).

At Ala2 the chain carries N-acetylalanine. Phosphoserine is present on Ser6. 3 Solcar repeats span residues 23-108, 117-208, and 217-306; these read VKFL…LFER, PGFL…SKQF, and DNIL…MNKA. A helical membrane pass occupies residues 24–42; sequence KFLFGGLAGMGATVFVQPL. Lys57 is subject to N6-succinyllysine. Position 73 is an N6-acetyllysine (Lys73). A helical membrane pass occupies residues 83–101; the sequence is GLSAGLLRQATYTTTRLGI. A Phosphotyrosine modification is found at Tyr102. A run of 3 helical transmembrane segments spans residues 119 to 140, 183 to 202, and 222 to 240; these read FLLK…GTPA, GCIP…LASY, and HFCA…SMPV. Position 256 is an N6-acetyllysine (Lys256). Residues 281–300 form a helical membrane-spanning segment; that stretch reads GFTPYYARLGPHTVLTFIFL.

The protein belongs to the mitochondrial carrier (TC 2.A.29) family. As to quaternary structure, interacts with SMIM26.

It localises to the mitochondrion inner membrane. It catalyses the reaction (S)-malate(in) + 2-oxoglutarate(out) = (S)-malate(out) + 2-oxoglutarate(in). The catalysed reaction is malonate(in) + 2-oxoglutarate(out) = malonate(out) + 2-oxoglutarate(in). The enzyme catalyses succinate(in) + 2-oxoglutarate(out) = succinate(out) + 2-oxoglutarate(in). It carries out the reaction maleate(in) + 2-oxoglutarate(out) = maleate(out) + 2-oxoglutarate(in). It catalyses the reaction oxaloacetate(in) + 2-oxoglutarate(out) = oxaloacetate(out) + 2-oxoglutarate(in). In terms of biological role, catalyzes the transport of 2-oxoglutarate (alpha-oxoglutarate) across the inner mitochondrial membrane in an electroneutral exchange for malate. Can also exchange 2-oxoglutarate for other dicarboxylic acids such as malonate, succinate, maleate and oxaloacetate, although with lower affinity. Contributes to several metabolic processes, including the malate-aspartate shuttle, the oxoglutarate/isocitrate shuttle, in gluconeogenesis from lactate, and in nitrogen metabolism. Maintains mitochondrial fusion and fission events, and the organization and morphology of cristae. Involved in the regulation of apoptosis. Helps protect from cytotoxic-induced apoptosis by modulating glutathione levels in mitochondria. In Mus musculus (Mouse), this protein is Mitochondrial 2-oxoglutarate/malate carrier protein (Slc25a11).